The sequence spans 183 residues: Ribosome-recycling factor (183 aa).

Belongs to the RRF family.

It localises to the cytoplasm. Responsible for the release of ribosomes from messenger RNA at the termination of protein biosynthesis. May increase the efficiency of translation by recycling ribosomes from one round of translation to another. In Ureaplasma parvum serovar 3 (strain ATCC 27815 / 27 / NCTC 11736), this protein is Ribosome-recycling factor.